Consider the following 473-residue polypeptide: Mediator of RNA polymerase II transcription subunit 29 (473 aa).

The span at 1–12 shows a compositional bias: polar residues; sequence MSGQGPPSNLTP. 2 disordered regions span residues 1-319 and 444-473; these read MSGQ…NEEQ and STME…EMAE. Residues 13 to 50 show a composition bias toward low complexity; that stretch reads QQQHMIMQQQQQQQMMRQQQIQQQQLHQRQLQQQQAQQ. The span at 51–62 shows a compositional bias: polar residues; it reads SYQRSRTPQMQQ. 2 stretches are compositionally biased toward low complexity: residues 111 to 123 and 130 to 139; these read QMMQ…NQPM and VSRPGSVAPP. Composition is skewed to polar residues over residues 148 to 183 and 255 to 269; these read TGPS…QQSH and PPGS…QPGS. 2 stretches are compositionally biased toward low complexity: residues 272 to 286 and 294 to 308; these read APGS…QPPA and AASG…AAPA.

Belongs to the Mediator complex subunit 29 family. As to quaternary structure, component of the Mediator complex.

The protein localises to the nucleus. In terms of biological role, component of the Mediator complex, a coactivator involved in the regulated transcription of nearly all RNA polymerase II-dependent genes. Mediator functions as a bridge to convey information from gene-specific regulatory proteins to the basal RNA polymerase II transcription machinery. Mediator is recruited to promoters by direct interactions with regulatory proteins and serves as a scaffold for the assembly of a functional preinitiation complex with RNA polymerase II and the general transcription factors. This chain is Mediator of RNA polymerase II transcription subunit 29 (mdt-29), found in Caenorhabditis briggsae.